The following is a 217-amino-acid chain: GrpE protein homolog 1, mitochondrial (217 aa).

Residues 1-27 (MAARCVRLARGSLPAFALSLRSSPRLL) constitute a mitochondrion transit peptide. Lys-94 is modified (N6-acetyllysine; alternate). The residue at position 94 (Lys-94) is an N6-succinyllysine; alternate. Lys-100 is modified (N6-acetyllysine). Residue Lys-120 is modified to N6-succinyllysine. Lys-215 carries the N6-acetyllysine; alternate modification. Residue Lys-215 is modified to N6-succinyllysine; alternate.

It belongs to the GrpE family. As to quaternary structure, probable component of the PAM complex at least composed of a mitochondrial HSP70 protein, GRPEL1 or GRPEL2, TIMM44, TIMM16/PAM16 and TIMM14/DNAJC19. Binds to HSP70, HSC70 and HSJ1B.

The protein localises to the mitochondrion matrix. Essential component of the PAM complex, a complex required for the translocation of transit peptide-containing proteins from the inner membrane into the mitochondrial matrix in an ATP-dependent manner. Seems to control the nucleotide-dependent binding of mitochondrial HSP70 to substrate proteins. In Bos taurus (Bovine), this protein is GrpE protein homolog 1, mitochondrial (GRPEL1).